Consider the following 1299-residue polypeptide: DNA-directed RNA polymerase subunit beta' (1299 aa).

Residues Cys-60, Cys-62, Cys-75, and Cys-78 each coordinate Zn(2+). Positions 535, 537, and 539 each coordinate Mg(2+). Zn(2+)-binding residues include Cys-877, Cys-954, Cys-961, and Cys-964.

The protein belongs to the RNA polymerase beta' chain family. In terms of assembly, the RNAP catalytic core consists of 2 alpha, 1 beta, 1 beta' and 1 omega subunit. When a sigma factor is associated with the core the holoenzyme is formed, which can initiate transcription. Mg(2+) is required as a cofactor. The cofactor is Zn(2+).

The catalysed reaction is RNA(n) + a ribonucleoside 5'-triphosphate = RNA(n+1) + diphosphate. Functionally, DNA-dependent RNA polymerase catalyzes the transcription of DNA into RNA using the four ribonucleoside triphosphates as substrates. This is DNA-directed RNA polymerase subunit beta' from Paenarthrobacter aurescens (strain TC1).